A 219-amino-acid polypeptide reads, in one-letter code: Thiamine-phosphate synthase (219 aa).

Residues 48-52 and Asn-84 each bind 4-amino-2-methyl-5-(diphosphooxymethyl)pyrimidine; that span reads QFRQK. Mg(2+)-binding residues include Asp-85 and Asp-104. Ser-123 lines the 4-amino-2-methyl-5-(diphosphooxymethyl)pyrimidine pocket. Position 150–152 (150–152) interacts with 2-[(2R,5Z)-2-carboxy-4-methylthiazol-5(2H)-ylidene]ethyl phosphate; that stretch reads TPS. Lys-153 lines the 4-amino-2-methyl-5-(diphosphooxymethyl)pyrimidine pocket. 2-[(2R,5Z)-2-carboxy-4-methylthiazol-5(2H)-ylidene]ethyl phosphate is bound by residues Gly-181 and 199-200; that span reads IS.

The protein belongs to the thiamine-phosphate synthase family. The cofactor is Mg(2+).

It catalyses the reaction 2-[(2R,5Z)-2-carboxy-4-methylthiazol-5(2H)-ylidene]ethyl phosphate + 4-amino-2-methyl-5-(diphosphooxymethyl)pyrimidine + 2 H(+) = thiamine phosphate + CO2 + diphosphate. It carries out the reaction 2-(2-carboxy-4-methylthiazol-5-yl)ethyl phosphate + 4-amino-2-methyl-5-(diphosphooxymethyl)pyrimidine + 2 H(+) = thiamine phosphate + CO2 + diphosphate. The catalysed reaction is 4-methyl-5-(2-phosphooxyethyl)-thiazole + 4-amino-2-methyl-5-(diphosphooxymethyl)pyrimidine + H(+) = thiamine phosphate + diphosphate. It participates in cofactor biosynthesis; thiamine diphosphate biosynthesis; thiamine phosphate from 4-amino-2-methyl-5-diphosphomethylpyrimidine and 4-methyl-5-(2-phosphoethyl)-thiazole: step 1/1. Functionally, condenses 4-methyl-5-(beta-hydroxyethyl)thiazole monophosphate (THZ-P) and 2-methyl-4-amino-5-hydroxymethyl pyrimidine pyrophosphate (HMP-PP) to form thiamine monophosphate (TMP). This is Thiamine-phosphate synthase from Helicobacter pylori (strain ATCC 700392 / 26695) (Campylobacter pylori).